The following is a 266-amino-acid chain: Aquaporin TIP3-2 (266 aa).

The next 2 membrane-spanning stretches (helical) occupy residues 29-49 (AAISEFIATAIFVFAAEGSVL) and 66-86 (GLVAVALAHALGLAVAVAVAV). The NPA 1 motif lies at 94–96 (NPA). The next 3 membrane-spanning stretches (helical) occupy residues 109 to 129 (LVRAVLYWAAQLLGAVAATLL), 153 to 173 (AVLLEAVMTFGFVYAYYATVV), and 180 to 200 (LGTIAPLAVGFLLGANVLAGG). The NPA 2 signature appears at 208–210 (NPA). A helical membrane pass occupies residues 228-248 (YWLGPFLGAGLAGLVYEYLLI).

It belongs to the MIP/aquaporin (TC 1.A.8) family. TIP (TC 1.A.8.10) subfamily.

It is found in the vacuole membrane. Aquaporins facilitate the transport of water and small neutral solutes across cell membranes. This chain is Aquaporin TIP3-2 (TIP3-2), found in Zea mays (Maize).